Here is a 412-residue protein sequence, read N- to C-terminus: Transforming growth factor beta-2 proprotein (412 aa).

An N-terminal signal peptide occupies residues 1–20 (MHCYLLSVFLTLDLAAVALS). 3 N-linked (GlcNAc...) asparagine glycosylation sites follow: Asn-72, Asn-139, and Asn-240. Intrachain disulfides connect Cys-307/Cys-316, Cys-315/Cys-378, Cys-344/Cys-409, and Cys-348/Cys-411.

It belongs to the TGF-beta family. In terms of assembly, interacts with Transforming growth factor beta-2 (TGF-beta-2) chain; interaction is non-covalent and maintains (TGF-beta-2) in a latent state. As to quaternary structure, homodimer; disulfide-linked. Interacts with TGF-beta receptors (TGFBR1 and TGFBR2), leading to signal transduction. Post-translationally, the precursor proprotein is cleaved in the Golgi apparatus to form Transforming growth factor beta-2 (TGF-beta-2) and Latency-associated peptide (LAP) chains, which remain non-covalently linked, rendering TGF-beta-2 inactive.

It is found in the secreted. The protein resides in the extracellular space. It localises to the extracellular matrix. Functionally, precursor of the Latency-associated peptide (LAP) and Transforming growth factor beta-2 (TGF-beta-2) chains, which constitute the regulatory and active subunit of TGF-beta-2, respectively. Its function is as follows. Required to maintain the Transforming growth factor beta-2 (TGF-beta-2) chain in a latent state during storage in extracellular matrix. Associates non-covalently with TGF-beta-2 and regulates its activation via interaction with 'milieu molecules', such as LTBP1 and LRRC32/GARP, that control activation of TGF-beta-2. In terms of biological role, multifunctional protein that regulates various processes such as angiogenesis and heart development. Activation into mature form follows different steps: following cleavage of the proprotein in the Golgi apparatus, Latency-associated peptide (LAP) and Transforming growth factor beta-2 (TGF-beta-2) chains remain non-covalently linked rendering TGF-beta-2 inactive during storage in extracellular matrix. At the same time, LAP chain interacts with 'milieu molecules', such as LTBP1 and LRRC32/GARP, that control activation of TGF-beta-2 and maintain it in a latent state during storage in extracellular milieus. Once activated following release of LAP, TGF-beta-2 acts by binding to TGF-beta receptors (TGFBR1 and TGFBR2), which transduce signal. This Gallus gallus (Chicken) protein is Transforming growth factor beta-2 proprotein (TGFB2).